A 639-amino-acid chain; its full sequence is Homeobox protein 9 (639 aa).

Disordered stretches follow at residues 1 to 45 (MLNS…DKQN), 66 to 144 (SPNH…DDNS), 157 to 179 (NQNQ…QNQN), 262 to 313 (PRTL…SSGT), 331 to 422 (SESS…QTSN), and 436 to 547 (TNKN…NNEN). Positions 72 to 109 (ANNNNNNNNNNNNNNNNNNNNNNNNNNNNNNNNNNNIQ) form a coiled coil. Composition is skewed to low complexity over residues 73-119 (NNNN…SNNN) and 126-142 (GSLN…GNDD). 2 coiled-coil regions span residues 152-184 (SNQN…KDSW) and 230-296 (EIEI…NINE). Over residues 266–300 (NNSSDSISENINNNNNNNNNNNNNNNNNINESNIN) the composition is skewed to low complexity. Over residues 345–354 (QPRKVPRDLN) the composition is skewed to basic and acidic residues. Residues 358 to 399 (NNNINYANNNNNNNNNNNNNNHNNNINNNNNNNNNNNNNSNN) show a composition bias toward low complexity. A coiled-coil region spans residues 365–396 (NNNNNNNNNNNNNNHNNNINNNNNNNNNNNNN). The span at 405–422 (GSITNSVNIKPSKDQTSN) shows a compositional bias: polar residues. The span at 436–526 (TNKNNNNNNN…NNNLTSSSNN (91 aa)) shows a compositional bias: low complexity. Positions 532–547 (GNTSPNQSSANGNNEN) are enriched in polar residues. The homeobox DNA-binding region spans 559–621 (KRKKRGKLPG…NARRRILPRQ (63 aa)).

It localises to the nucleus. Putative transcription factor. The chain is Homeobox protein 9 (hbx9) from Dictyostelium discoideum (Social amoeba).